Consider the following 377-residue polypeptide: Homocitrate synthase 1 (377 aa).

In terms of domain architecture, Pyruvate carboxyltransferase spans Val-4–Leu-255.

It belongs to the alpha-IPM synthase/homocitrate synthase family.

The catalysed reaction is acetyl-CoA + 2-oxoglutarate + H2O = (2R)-homocitrate + CoA + H(+). Its function is as follows. This protein is a Fe-Mo-cofactor biosynthetic component. The sequence is that of Homocitrate synthase 1 (nifV1) from Nostoc sp. (strain PCC 7120 / SAG 25.82 / UTEX 2576).